We begin with the raw amino-acid sequence, 381 residues long: Beta-lactamase (381 aa).

The first 20 residues, 1 to 20, serve as a signal peptide directing secretion; sequence MMKKSICCALLLTASFSTFA. S84 (acyl-ester intermediate) is an active-site residue. Catalysis depends on Y170, which acts as the Proton acceptor. Residue 335–337 coordinates substrate; it reads KTG.

Belongs to the class-C beta-lactamase family.

It localises to the periplasm. The enzyme catalyses a beta-lactam + H2O = a substituted beta-amino acid. Its activity is regulated as follows. Sulbactam is an effective progressive inhibitor but a poor competitive inhibitor. In terms of biological role, this protein is a serine beta-lactamase with a substrate specificity for cephalosporins. The sequence is that of Beta-lactamase (ampC) from Citrobacter freundii.